The sequence spans 357 residues: tRNA N6-adenosine threonylcarbamoyltransferase (357 aa).

Residues His-119 and His-123 each coordinate Fe cation. Substrate-binding positions include 141-145, Asp-174, Gly-187, and Asn-284; that span reads LISGG. Asp-312 serves as a coordination point for Fe cation.

This sequence belongs to the KAE1 / TsaD family. The cofactor is Fe(2+).

The protein localises to the cytoplasm. The enzyme catalyses L-threonylcarbamoyladenylate + adenosine(37) in tRNA = N(6)-L-threonylcarbamoyladenosine(37) in tRNA + AMP + H(+). In terms of biological role, required for the formation of a threonylcarbamoyl group on adenosine at position 37 (t(6)A37) in tRNAs that read codons beginning with adenine. Is involved in the transfer of the threonylcarbamoyl moiety of threonylcarbamoyl-AMP (TC-AMP) to the N6 group of A37, together with TsaE and TsaB. TsaD likely plays a direct catalytic role in this reaction. The protein is tRNA N6-adenosine threonylcarbamoyltransferase of Pelagibacter ubique (strain HTCC1062).